A 343-amino-acid chain; its full sequence is Small ribosomal subunit biogenesis GTPase RsgA (343 aa).

A CP-type G domain is found at 116–275 (RGQLKPVAAN…LIDSPGIREF (160 aa)). GTP is bound by residues 163–166 (NKAD) and 217–225 (GQSGVGKSS). Zn(2+)-binding residues include Cys-299, Cys-304, His-306, and Cys-312.

This sequence belongs to the TRAFAC class YlqF/YawG GTPase family. RsgA subfamily. In terms of assembly, monomer. Associates with 30S ribosomal subunit, binds 16S rRNA. It depends on Zn(2+) as a cofactor.

Its subcellular location is the cytoplasm. In terms of biological role, one of several proteins that assist in the late maturation steps of the functional core of the 30S ribosomal subunit. Helps release RbfA from mature subunits. May play a role in the assembly of ribosomal proteins into the subunit. Circularly permuted GTPase that catalyzes slow GTP hydrolysis, GTPase activity is stimulated by the 30S ribosomal subunit. This is Small ribosomal subunit biogenesis GTPase RsgA from Pseudomonas syringae pv. syringae (strain B728a).